The primary structure comprises 81 residues: Mipartoxin-1A (81 aa).

Residues 1–21 (MKTLLLTLVVVTIVCLDLGNS) form the signal peptide. Cystine bridges form between cysteine 24-cysteine 42, cysteine 35-cysteine 61, cysteine 65-cysteine 73, and cysteine 74-cysteine 79.

This sequence belongs to the three-finger toxin family. Short-chain subfamily. As to expression, expressed by the venom gland.

The protein localises to the secreted. Snake venom neurotoxin that blocks neuromuscular transmission, presenting a postsynaptic action through the nicotinic acetylcholine receptor (nAChR). Has no cytotoxic activity. This is Mipartoxin-1A from Micrurus mipartitus (Red-tailed coral snake).